The sequence spans 225 residues: PKHD-type hydroxylase YbiX (225 aa).

The Fe2OG dioxygenase domain maps to 78–177 (TLSTPLFNRY…RVASFMWIQS (100 aa)). Positions 96, 98, and 158 each coordinate Fe cation. Arg-168 serves as a coordination point for 2-oxoglutarate.

It depends on Fe(2+) as a cofactor. Requires L-ascorbate as cofactor.

The chain is PKHD-type hydroxylase YbiX from Shigella flexneri serotype 5b (strain 8401).